The sequence spans 564 residues: Protein glycosylation K (564 aa).

At 1–15 (MLKKLFFILSKEDKN) the chain is on the cytoplasmic side. The helical transmembrane segment at 16-38 (FLFFLLVFSVFISFIETFAISLV) threads the bilayer. An ABC transmembrane type-1 domain is found at 17–319 (LFFLLVFSVF…IITSYHDLLY (303 aa)). The Extracellular portion of the chain corresponds to 39–76 (MPFITLASDFSYFDRNKYLISLKEYLNIPVFEIIVYFG). The segment at 46 to 67 (SDFSYFDRNKYLISLKEYLNIP) is important for stimulation of ATPase activity by lipid-linked oligosaccharides and subsequent translocation of lipid-linked oligosaccharides. The helical transmembrane segment at 77-98 (VGLIVFYVFRALLNAYYFHLLA) threads the bilayer. The Cytoplasmic segment spans residues 99–149 (RFSKGRYHAIAYKVFSKFLNINYEKFTQKNQSEILKSITGEVYNLSTMISS). The chain crosses the membrane as a helical span at residues 150 to 170 (FLLLMSEIFVVLLLYALMLLI). Residues 171 to 173 (NYK) lie on the Extracellular side of the membrane. The helical transmembrane segment at 174 to 197 (ITLFLSIFMVLNAFILVKILSPII) threads the bilayer. Over 198–254 (KKAGVRREEAMKNFFEILNTNLNNFKFIKLKTKEDGVLSLFKAQSEAFSKANITNES) the chain is Cytoplasmic. The helical transmembrane segment at 255–276 (VAAVPRIYLEGIGFCVLVFIVV) threads the bilayer. The Extracellular portion of the chain corresponds to 277–292 (FLVLKNESDISGILST). The chain crosses the membrane as a helical span at residues 293–314 (ISIFVLALYRLMPSANRIITSY). Residues 315 to 564 (HDLLYYHSSL…LEHGKLKEEK (250 aa)) lie on the Cytoplasmic side of the membrane. One can recognise an ABC transporter domain in the interval 349–564 (LKICNLSFGY…LEHGKLKEEK (216 aa)). 382 to 389 (GESGCGKS) contributes to the ATP binding site.

Belongs to the ABC transporter superfamily. Homodimer; domain-swapped. Helices that arise in transmembrane regions 4 and 5 from one subunit cross over and contact the nucleotide-binding domain from the other subunit.

Its subcellular location is the cell inner membrane. The enzyme catalyses ATP + H2O + lipopolysaccharideSide 1 = ADP + phosphate + lipopolysaccharideSide 2.. Its pathway is protein modification; protein glycosylation. Functionally, mediates the ATP-dependent translocation of the undecaprenylpyrophosphate-linked heptasaccharide intermediate across the cell membrane; this is an essential step during the N-linked protein glycosylation pathway. Transport across the membrane is effected via ATP-driven conformation changes. Most likely, only the polar and charged part of the glycolipid enter the substrate-binding cavity, and the lipid tail remains exposed to the membrane lipids during the transmembrane flipping process. In Campylobacter jejuni subsp. jejuni serotype O:2 (strain ATCC 700819 / NCTC 11168), this protein is Protein glycosylation K (pglK).